Here is a 311-residue protein sequence, read N- to C-terminus: Catechol 1,2-dioxygenase (311 aa).

Y164 lines the catechol pocket. Residues Y164, Y200, H224, and H226 each coordinate Fe cation. 224–226 (HIH) contacts catechol.

This sequence belongs to the intradiol ring-cleavage dioxygenase family. In terms of assembly, homodimer. The cofactor is Fe(3+).

It carries out the reaction catechol + O2 = cis,cis-muconate + 2 H(+). The protein operates within aromatic compound metabolism; beta-ketoadipate pathway; 5-oxo-4,5-dihydro-2-furylacetate from catechol: step 1/3. The sequence is that of Catechol 1,2-dioxygenase from Acinetobacter baylyi (strain ATCC 33305 / BD413 / ADP1).